Reading from the N-terminus, the 513-residue chain is Maturase K (513 aa).

This sequence belongs to the intron maturase 2 family. MatK subfamily.

Its subcellular location is the plastid. The protein resides in the chloroplast. Usually encoded in the trnK tRNA gene intron. Probably assists in splicing its own and other chloroplast group II introns. The sequence is that of Maturase K from Keckiella cordifolia (Heart-leafed penstemon).